A 438-amino-acid polypeptide reads, in one-letter code: Argininosuccinate lyase (438 aa).

It belongs to the lyase 1 family. Argininosuccinate lyase subfamily.

It is found in the cytoplasm. The catalysed reaction is 2-(N(omega)-L-arginino)succinate = fumarate + L-arginine. It functions in the pathway amino-acid biosynthesis; L-arginine biosynthesis; L-arginine from L-ornithine and carbamoyl phosphate: step 3/3. This Clostridioides difficile (strain 630) (Peptoclostridium difficile) protein is Argininosuccinate lyase.